The primary structure comprises 140 residues: Nucleoside diphosphate kinase (140 aa).

6 residues coordinate ATP: lysine 11, phenylalanine 59, arginine 87, threonine 93, arginine 104, and asparagine 114. Histidine 117 (pros-phosphohistidine intermediate) is an active-site residue.

This sequence belongs to the NDK family. As to quaternary structure, homotetramer. Mg(2+) is required as a cofactor.

The protein localises to the cytoplasm. The catalysed reaction is a 2'-deoxyribonucleoside 5'-diphosphate + ATP = a 2'-deoxyribonucleoside 5'-triphosphate + ADP. It carries out the reaction a ribonucleoside 5'-diphosphate + ATP = a ribonucleoside 5'-triphosphate + ADP. Major role in the synthesis of nucleoside triphosphates other than ATP. The ATP gamma phosphate is transferred to the NDP beta phosphate via a ping-pong mechanism, using a phosphorylated active-site intermediate. The protein is Nucleoside diphosphate kinase of Cereibacter sphaeroides (strain ATCC 17029 / ATH 2.4.9) (Rhodobacter sphaeroides).